Reading from the N-terminus, the 220-residue chain is Deoxyribose-phosphate aldolase (220 aa).

Aspartate 89 serves as the catalytic Proton donor/acceptor. The active-site Schiff-base intermediate with acetaldehyde is lysine 151. The Proton donor/acceptor role is filled by lysine 180.

It belongs to the DeoC/FbaB aldolase family. DeoC type 1 subfamily.

It localises to the cytoplasm. It catalyses the reaction 2-deoxy-D-ribose 5-phosphate = D-glyceraldehyde 3-phosphate + acetaldehyde. It participates in carbohydrate degradation; 2-deoxy-D-ribose 1-phosphate degradation; D-glyceraldehyde 3-phosphate and acetaldehyde from 2-deoxy-alpha-D-ribose 1-phosphate: step 2/2. Its function is as follows. Catalyzes a reversible aldol reaction between acetaldehyde and D-glyceraldehyde 3-phosphate to generate 2-deoxy-D-ribose 5-phosphate. The sequence is that of Deoxyribose-phosphate aldolase from Staphylococcus epidermidis (strain ATCC 12228 / FDA PCI 1200).